The sequence spans 185 residues: Ribosome-recycling factor (185 aa).

The span at 138-179 (TLKRQEKNGDITEDEQRSLEKQVQKVTDDATKEIDKLADQKS) shows a compositional bias: basic and acidic residues. A disordered region spans residues 138–185 (TLKRQEKNGDITEDEQRSLEKQVQKVTDDATKEIDKLADQKSQEITQG).

Belongs to the RRF family.

It is found in the cytoplasm. Responsible for the release of ribosomes from messenger RNA at the termination of protein biosynthesis. May increase the efficiency of translation by recycling ribosomes from one round of translation to another. The protein is Ribosome-recycling factor of Lactobacillus gasseri (strain ATCC 33323 / DSM 20243 / BCRC 14619 / CIP 102991 / JCM 1131 / KCTC 3163 / NCIMB 11718 / NCTC 13722 / AM63).